We begin with the raw amino-acid sequence, 229 residues long: Potassium/proton antiporter CemA (229 aa).

Transmembrane regions (helical) follow at residues 11–31 (TTPFLYLASIVFLPWWISLFF), 118–138 (IISFVILSVCSILGNEELVIL), 158–178 (LLALTDFLFGFHTISAWELLI), and 190–210 (LLVCLFPSVLHTIYYFWTFNY).

This sequence belongs to the CemA family.

It is found in the plastid. The protein resides in the chloroplast inner membrane. The catalysed reaction is K(+)(in) + H(+)(out) = K(+)(out) + H(+)(in). In terms of biological role, contributes to K(+)/H(+) antiport activity by supporting proton efflux to control proton extrusion and homeostasis in chloroplasts in a light-dependent manner to modulate photosynthesis. Prevents excessive induction of non-photochemical quenching (NPQ) under continuous-light conditions. Indirectly promotes efficient inorganic carbon uptake into chloroplasts. This chain is Potassium/proton antiporter CemA, found in Pelargonium hortorum (Common geranium).